A 328-amino-acid chain; its full sequence is Phenylalanine--tRNA ligase alpha subunit (328 aa).

Belongs to the class-II aminoacyl-tRNA synthetase family. Phe-tRNA synthetase alpha subunit type 1 subfamily. As to quaternary structure, tetramer of two alpha and two beta subunits. The cofactor is Mg(2+).

The protein localises to the cytoplasm. It catalyses the reaction tRNA(Phe) + L-phenylalanine + ATP = L-phenylalanyl-tRNA(Phe) + AMP + diphosphate + H(+). This chain is Phenylalanine--tRNA ligase alpha subunit, found in Buchnera aphidicola subsp. Baizongia pistaciae (strain Bp).